Consider the following 366-residue polypeptide: Carbamoyl phosphate synthase small chain (366 aa).

A CPSase region spans residues 1-171 (MKKRKLILED…KPYVVPGRGL (171 aa)). L-glutamine-binding residues include Ser-46, Gly-220, and Gly-222. The Glutamine amidotransferase type-1 domain occupies 172–359 (RVVMVDFGAK…LNLIKASKVK (188 aa)). The active-site Nucleophile is the Cys-247. Positions 248, 251, 289, and 292 each coordinate L-glutamine. Residues His-332 and Glu-334 contribute to the active site.

Belongs to the CarA family. As to quaternary structure, composed of two chains; the small (or glutamine) chain promotes the hydrolysis of glutamine to ammonia, which is used by the large (or ammonia) chain to synthesize carbamoyl phosphate. Tetramer of heterodimers (alpha,beta)4.

It carries out the reaction hydrogencarbonate + L-glutamine + 2 ATP + H2O = carbamoyl phosphate + L-glutamate + 2 ADP + phosphate + 2 H(+). The catalysed reaction is L-glutamine + H2O = L-glutamate + NH4(+). Its pathway is amino-acid biosynthesis; L-arginine biosynthesis; carbamoyl phosphate from bicarbonate: step 1/1. It participates in pyrimidine metabolism; UMP biosynthesis via de novo pathway; (S)-dihydroorotate from bicarbonate: step 1/3. Small subunit of the glutamine-dependent carbamoyl phosphate synthetase (CPSase). CPSase catalyzes the formation of carbamoyl phosphate from the ammonia moiety of glutamine, carbonate, and phosphate donated by ATP, constituting the first step of 2 biosynthetic pathways, one leading to arginine and/or urea and the other to pyrimidine nucleotides. The small subunit (glutamine amidotransferase) binds and cleaves glutamine to supply the large subunit with the substrate ammonia. This chain is Carbamoyl phosphate synthase small chain, found in Oceanobacillus iheyensis (strain DSM 14371 / CIP 107618 / JCM 11309 / KCTC 3954 / HTE831).